A 184-amino-acid chain; its full sequence is UPF0301 protein SPO0296 (184 aa).

Belongs to the UPF0301 (AlgH) family.

In Ruegeria pomeroyi (strain ATCC 700808 / DSM 15171 / DSS-3) (Silicibacter pomeroyi), this protein is UPF0301 protein SPO0296.